Consider the following 1363-residue polypeptide: DNA-directed RNA polymerase subunit beta (1363 aa).

Belongs to the RNA polymerase beta chain family. In terms of assembly, the RNAP catalytic core consists of 2 alpha, 1 beta, 1 beta' and 1 omega subunit. When a sigma factor is associated with the core the holoenzyme is formed, which can initiate transcription.

It catalyses the reaction RNA(n) + a ribonucleoside 5'-triphosphate = RNA(n+1) + diphosphate. Its function is as follows. DNA-dependent RNA polymerase catalyzes the transcription of DNA into RNA using the four ribonucleoside triphosphates as substrates. The chain is DNA-directed RNA polymerase subunit beta from Neorickettsia risticii (Ehrlichia risticii).